Reading from the N-terminus, the 1155-residue chain is RhoGEF domain-containing protein gxcJ (1155 aa).

Disordered regions lie at residues 114–216, 259–333, 429–460, 484–508, and 604–639; these read ENNS…NFLK, LNKK…IPSN, LVSQ…DSLE, LNNE…TTTT, and SNSN…NNYQ. 3 stretches are compositionally biased toward low complexity: residues 115–153, 161–211, and 260–303; these read NNSI…TNNN, TITN…NNNN, and NKKS…NNNN. Positions 192-257 form a coiled coil; that stretch reads NNNNNNNNNN…KDIEKLNSAL (66 aa). The span at 304–319 shows a compositional bias: polar residues; sequence YKPTITSSQTQPSLME. Residues 320–330 are compositionally biased toward basic and acidic residues; it reads NSKDIDKKEKI. A compositionally biased stretch (low complexity) spans 441-457; it reads FLASASSSSTTTITTTD. The span at 604–637 shows a compositional bias: low complexity; the sequence is SNSNSSNNNNSNSNNITNSNSSSFSKKNSNNNNN. The region spanning 700-874 is the DH domain; sequence HRTNLIKEIL…EKIVGTINSQ (175 aa). Positions 1084–1155 are disordered; sequence SHRLSIPSTS…LVKSLVNIKT (72 aa). Composition is skewed to low complexity over residues 1093–1121 and 1128–1137; these read SSPN…GSPN and QQQQLQQQQQ.

GTPase-activating protein. The protein is RhoGEF domain-containing protein gxcJ (gxcJ) of Dictyostelium discoideum (Social amoeba).